Here is a 247-residue protein sequence, read N- to C-terminus: Transcription factor otaR1 (247 aa).

Disordered regions lie at residues methionine 1–methionine 48 and aspartate 100–asparagine 143. Residues aspartate 23 to serine 47 are compositionally biased toward low complexity. The segment covering alanine 134–asparagine 143 has biased composition (polar residues). Residues lysine 156 to lysine 196 are basic motif. One can recognise a bZIP domain in the interval lysine 156–histidine 219. Residues leucine 198–leucine 212 are leucine-zipper.

Its subcellular location is the nucleus. Transcription factor; part of the gene cluster that mediates the biosynthesis of ochratoxin A (OTA), a mycotoxin demonstrated to have nephrotoxic, immunotoxic, genotoxic, neurotoxic, and teratogenic properties. Positively regulates the expression of the cluster genes otaA, otaB, otaC and otaD, and the subsequent production of OTA. This Aspergillus carbonarius (strain ITEM 5010) protein is Transcription factor otaR1.